The sequence spans 65 residues: Venom protein Vn4.6 (65 aa).

Positions 1 to 23 (MSKIILAIFLIVLCGLIFVTVDA) are cleaved as a signal peptide.

Post-translationally, contains 2 disulfide bonds. In terms of tissue distribution, expressed by the venom gland.

The protein resides in the secreted. Its function is as follows. Endoparasitoid venom protein that interferes with the activation of host hemolymph prophenoloxidase. May act in conjunction with other venom proteins (such as Vn50), by competitive binding to the zymogen and thereby interrupting the enzyme. This Cotesia rubecula (Cabbage white butterfly parasite) protein is Venom protein Vn4.6.